Consider the following 133-residue polypeptide: Profilin-1 (133 aa).

Belongs to the profilin family. As to quaternary structure, occurs in many kinds of cells as a complex with monomeric actin in a 1:1 ratio. As to expression, ubiquitous.

Its subcellular location is the cytoplasm. It is found in the cytoskeleton. Functionally, binds to actin and affects the structure of the cytoskeleton. At high concentrations, profilin prevents the polymerization of actin, whereas it enhances it at low concentrations. By binding to PIP2, it inhibits the formation of IP3 and DG. This chain is Profilin-1 (PRO1), found in Solanum lycopersicum (Tomato).